The sequence spans 151 residues: Alpha-latroinsectotoxin-Lh1a (151 aa).

8 ANK repeats span residues 21–37 (TDVT…DLNA), 41–52 (ILIRNTNAVINI), 56–80 (VGLT…YLND), 84–104 (NGMT…VDFL), 105–116 (KWTPLHLAILFK), 117–125 (QLVIELLAK), 126–146 (TFFD…AVEK), and 147–151 (YIAAR).

The protein belongs to the cationic peptide 01 (latrotoxin) family. 02 (alpha-latroinsectotoxin) subfamily. Homotetramer in membranes. As to expression, expressed by the venom gland.

It localises to the secreted. Its subcellular location is the target cell membrane. In terms of biological role, insecticidal presynaptic neurotoxin that induces massive neurotransmitter release at insect (but not vertebrate) neuromuscular junctions. Native toxin forms cation-permeable pores (with high permeability to calcium) in lipid membranes locust muscle membrane and artificial lipid bilayers. May bind to insect neurexin-1 homolog, insect adhesion G protein-coupled receptor L1 homolog, and insect receptor-type tyrosine-protein phosphatase S homolog, and induces neurotransmitter exocytosis both by forming tetrameric pores in membranes and signaling via G protein-coupled receptor. Oligomerization is a process independent of divalent cations. The toxin forms channels with 0.55-0.58 nm entrance diameter and a relatively small conductance in planar phospholipid membranes. This is Alpha-latroinsectotoxin-Lh1a from Latrodectus hasselti (Redback spider).